The sequence spans 471 residues: 3-isopropylmalate dehydratase large subunit (471 aa).

3 residues coordinate [4Fe-4S] cluster: cysteine 347, cysteine 407, and cysteine 410.

It belongs to the aconitase/IPM isomerase family. LeuC type 1 subfamily. In terms of assembly, heterodimer of LeuC and LeuD. The cofactor is [4Fe-4S] cluster.

The enzyme catalyses (2R,3S)-3-isopropylmalate = (2S)-2-isopropylmalate. The protein operates within amino-acid biosynthesis; L-leucine biosynthesis; L-leucine from 3-methyl-2-oxobutanoate: step 2/4. In terms of biological role, catalyzes the isomerization between 2-isopropylmalate and 3-isopropylmalate, via the formation of 2-isopropylmaleate. This Geobacillus kaustophilus (strain HTA426) protein is 3-isopropylmalate dehydratase large subunit.